A 302-amino-acid polypeptide reads, in one-letter code: 33 kDa chaperonin (302 aa).

Intrachain disulfides connect Cys255/Cys257 and Cys288/Cys291.

This sequence belongs to the HSP33 family. Under oxidizing conditions two disulfide bonds are formed involving the reactive cysteines. Under reducing conditions zinc is bound to the reactive cysteines and the protein is inactive.

The protein localises to the cytoplasm. In terms of biological role, redox regulated molecular chaperone. Protects both thermally unfolding and oxidatively damaged proteins from irreversible aggregation. Plays an important role in the bacterial defense system toward oxidative stress. The polypeptide is 33 kDa chaperonin (Caulobacter vibrioides (strain ATCC 19089 / CIP 103742 / CB 15) (Caulobacter crescentus)).